Here is a 180-residue protein sequence, read N- to C-terminus: Ribosome-recycling factor (180 aa).

Belongs to the RRF family.

It is found in the cytoplasm. Functionally, responsible for the release of ribosomes from messenger RNA at the termination of protein biosynthesis. May increase the efficiency of translation by recycling ribosomes from one round of translation to another. The polypeptide is Ribosome-recycling factor (Chlamydia caviae (strain ATCC VR-813 / DSM 19441 / 03DC25 / GPIC) (Chlamydophila caviae)).